The chain runs to 180 residues: Interleukin-17B (180 aa).

The signal sequence occupies residues Met-1–Pro-22. The segment at Pro-22–Gln-44 is disordered. The span at Arg-23–Gln-32 shows a compositional bias: basic residues. The N-linked (GlcNAc...) asparagine glycan is linked to Asn-75. Disulfide bonds link Cys-121–Cys-176 and Cys-126–Cys-178.

The protein belongs to the IL-17 family.

Its subcellular location is the secreted. Its function is as follows. Stimulates the release of tumor necrosis factor alpha and IL-1-beta from the monocytic cell line THP-1. The chain is Interleukin-17B (Il17b) from Mus musculus (Mouse).